We begin with the raw amino-acid sequence, 21 residues long: Glucan endo-1,3-beta-glucosidase 2 (21 aa).

The segment at 1-21 is disordered; sequence APGDLLWSDEFDGAAGSAPNP.

It catalyses the reaction Hydrolysis of (1-&gt;3)-beta-D-glucosidic linkages in (1-&gt;3)-beta-D-glucans.. The sequence is that of Glucan endo-1,3-beta-glucosidase 2 from Papiliotrema laurentii (Cryptococcus laurentii).